The chain runs to 149 residues: Large ribosomal subunit protein bL9 (149 aa).

Belongs to the bacterial ribosomal protein bL9 family.

Functionally, binds to the 23S rRNA. This Thermotoga sp. (strain RQ2) protein is Large ribosomal subunit protein bL9.